The primary structure comprises 201 residues: Peptidyl-prolyl cis-trans isomerase FKBP11 (201 aa).

The first 27 residues, 1–27, serve as a signal peptide directing secretion; it reads MTLRPSLLPLHLLLLLLLSAAVCRAEA. A PPIase FKBP-type domain is found at 57 to 144; it reads GDTLHIHYTG…QYDVELIALI (88 aa). Residues 156–176 form a helical membrane-spanning segment; sequence ILPLVGMAMVPALLGLIGYHL.

Belongs to the FKBP-type PPIase family. As to quaternary structure, interacts with IFITM5.

The protein localises to the membrane. It catalyses the reaction [protein]-peptidylproline (omega=180) = [protein]-peptidylproline (omega=0). In terms of biological role, PPIases accelerate the folding of proteins during protein synthesis. In Homo sapiens (Human), this protein is Peptidyl-prolyl cis-trans isomerase FKBP11 (FKBP11).